Here is a 520-residue protein sequence, read N- to C-terminus: Glucose starvation modulator protein 1 (520 aa).

The zn(2)-C6 fungal-type DNA-binding region spans 20 to 48 (CSFCHSKHLQCSNNRPCKNCVKRNIADQC). 2 disordered regions span residues 63–104 (AKNK…SSGR) and 194–213 (PASP…PNEM). Low complexity predominate over residues 74-85 (SLESSSSPFSPL). Over residues 90-104 (INSQSSQPLDPSSGR) the composition is skewed to polar residues. One can recognise a PAS domain in the interval 376-445 (DYEKLSHLNS…FKLFKSVAVG (70 aa)).

The protein belongs to the ERT1/acuK family.

It localises to the nucleus. Functionally, transcription factor which regulates nonfermentable carbon utilization. The protein is Glucose starvation modulator protein 1 (GSM1) of Meyerozyma guilliermondii (strain ATCC 6260 / CBS 566 / DSM 6381 / JCM 1539 / NBRC 10279 / NRRL Y-324) (Yeast).